We begin with the raw amino-acid sequence, 117 residues long: Large ribosomal subunit protein bL17 (117 aa).

This sequence belongs to the bacterial ribosomal protein bL17 family. As to quaternary structure, part of the 50S ribosomal subunit. Contacts protein L32.

The chain is Large ribosomal subunit protein bL17 from Coprothermobacter proteolyticus (strain ATCC 35245 / DSM 5265 / OCM 4 / BT).